The primary structure comprises 270 residues: Eukaryotic translation initiation factor 2 subunit beta (270 aa).

A disordered region spans residues 1-38 (MADEEQMERKEEATEIAPFDPTKKKKKKKVVIQDPADE).

This sequence belongs to the eIF-2-beta/eIF-5 family. As to quaternary structure, eukaryotic translation initiation factor 2 eIF2 is a heterotrimeric complex composed of an alpha, a beta and a gamma subunit.

Its subcellular location is the cytoplasm. It is found in the cytosol. Its function is as follows. Component of the eIF2 complex that functions in the early steps of protein synthesis by forming a ternary complex with GTP and initiator tRNA. This complex binds to a 40S ribosomal subunit, followed by mRNA binding to form a 43S pre-initiation complex (43S PIC). Junction of the 60S ribosomal subunit to form the 80S initiation complex is preceded by hydrolysis of the GTP bound to eIF2 and release of an eIF2-GDP binary complex. In order for eIF2 to recycle and catalyze another round of initiation, the GDP bound to eIF2 must exchange with GTP by way of a reaction catalyzed by eIF2B. The sequence is that of Eukaryotic translation initiation factor 2 subunit beta from Triticum aestivum (Wheat).